Reading from the N-terminus, the 383-residue chain is Chorismate synthase (383 aa).

Residues R39 and R45 each coordinate NADP(+). Residues 127 to 129, 249 to 250, G294, 309 to 313, and R335 each bind FMN; these read RAS, QS, and KPIPT.

Belongs to the chorismate synthase family. In terms of assembly, homotetramer. Requires FMNH2 as cofactor.

The enzyme catalyses 5-O-(1-carboxyvinyl)-3-phosphoshikimate = chorismate + phosphate. The protein operates within metabolic intermediate biosynthesis; chorismate biosynthesis; chorismate from D-erythrose 4-phosphate and phosphoenolpyruvate: step 7/7. Functionally, catalyzes the anti-1,4-elimination of the C-3 phosphate and the C-6 proR hydrogen from 5-enolpyruvylshikimate-3-phosphate (EPSP) to yield chorismate, which is the branch point compound that serves as the starting substrate for the three terminal pathways of aromatic amino acid biosynthesis. This reaction introduces a second double bond into the aromatic ring system. The polypeptide is Chorismate synthase (Caldicellulosiruptor bescii (strain ATCC BAA-1888 / DSM 6725 / KCTC 15123 / Z-1320) (Anaerocellum thermophilum)).